Reading from the N-terminus, the 379-residue chain is Beta sliding clamp (379 aa).

This sequence belongs to the beta sliding clamp family. As to quaternary structure, forms a ring-shaped head-to-tail homodimer around DNA which binds and tethers DNA polymerases and other proteins to the DNA. The DNA replisome complex has a single clamp-loading complex (3 tau and 1 each of delta, delta', psi and chi subunits) which binds 3 Pol III cores (1 core on the leading strand and 2 on the lagging strand) each with a beta sliding clamp dimer. Additional proteins in the replisome are other copies of gamma, psi and chi, Ssb, DNA helicase and RNA primase.

It is found in the cytoplasm. Its function is as follows. Confers DNA tethering and processivity to DNA polymerases and other proteins. Acts as a clamp, forming a ring around DNA (a reaction catalyzed by the clamp-loading complex) which diffuses in an ATP-independent manner freely and bidirectionally along dsDNA. Initially characterized for its ability to contact the catalytic subunit of DNA polymerase III (Pol III), a complex, multichain enzyme responsible for most of the replicative synthesis in bacteria; Pol III exhibits 3'-5' exonuclease proofreading activity. The beta chain is required for initiation of replication as well as for processivity of DNA replication. The protein is Beta sliding clamp (dnaN) of Rickettsia bellii (strain RML369-C).